Reading from the N-terminus, the 118-residue chain is Acidic phospholipase A2 PA-3 (118 aa).

7 cysteine pairs are disulfide-bonded: cysteine 11–cysteine 71, cysteine 27–cysteine 117, cysteine 29–cysteine 45, cysteine 44–cysteine 98, cysteine 51–cysteine 91, cysteine 60–cysteine 84, and cysteine 78–cysteine 89. Ca(2+) contacts are provided by tyrosine 28, glycine 30, and glycine 32. The active site involves histidine 48. Residue aspartate 49 participates in Ca(2+) binding. Aspartate 92 is an active-site residue.

Belongs to the phospholipase A2 family. Group I subfamily. D49 sub-subfamily. Ca(2+) is required as a cofactor. As to expression, expressed by the venom gland.

It localises to the secreted. It catalyses the reaction a 1,2-diacyl-sn-glycero-3-phosphocholine + H2O = a 1-acyl-sn-glycero-3-phosphocholine + a fatty acid + H(+). Its function is as follows. PLA2 catalyzes the calcium-dependent hydrolysis of the 2-acyl groups in 3-sn-phosphoglycerides. The chain is Acidic phospholipase A2 PA-3 from Pseudechis australis (Mulga snake).